The chain runs to 156 residues: CD-NTase/cGAS isopeptidase (156 aa).

Residues 16 to 156 (LVVIMGHVVT…LITVFKKIES (141 aa)) enclose the MPN domain. The active-site Proton donor/acceptor is Glu39. Zn(2+) contacts are provided by His101, His103, and Asp114. The short motif at 101 to 114 (HTHPEDRPFPSATD) is the JAMM motif element.

This sequence belongs to the peptidase M67B family. Cap3 isopeptidase subfamily. Zn(2+) serves as cofactor.

With respect to regulation, cleavage of conjugated proteins is inhibited by EDTA. Its function is as follows. Metalloprotease priming reversal component of a CBASS system. CBASS (cyclic oligonucleotide-based antiphage signaling system) provides immunity against bacteriophages. The CD-NTase protein (DncV) synthesizes cyclic nucleotides in response to infection; these serve as specific second messenger signals. The signals activate a diverse range of effectors, leading to bacterial cell death and thus abortive phage infection. A type II-A(GA) CBASS system. In terms of biological role, reverses the primed state of DncV, the CD-NTase. Cleaves a DncV-GFP (green fluorescent protein) fusion protein precisely at the C-terminus of DncV. Overexpression decreases the efficacy of CBASS protection against phages T2, T4, T5 and T6, blocks formation of DncV-conjugates in vivo, and inhibits in vivo activation of DncV. Antagonism of phage defense upon overexpression is CBASS-system specific, Cap3 from this bacteria only antagonizes its cognate CBASS system and not that of C.freundii, E.coli or E.hormaechei. Protects E.coli against phage infection. When the CBASS operon (capV-dncV-cap2-cap3) is introduced in E.coli MG1655 there is about 100-fold protection against phages P1 and T2. When the operon is introduced in E.coli MG1655 there is a more than 10(3) decrease in the efficiency of T2 plaque formation. Protects 100-fold against phage T5, offers no protection against T7. When the operon is introduced in E.coli MG1655 it protects against phages T2, T4, T5 and T6. Another paper shows the operon confers protection against phages P1, T2, T5 and T6 but not T4 or lambda. The chain is CD-NTase/cGAS isopeptidase from Vibrio cholerae serotype O1 (strain ATCC 39315 / El Tor Inaba N16961).